The primary structure comprises 441 residues: Signal recognition particle 54 kDa protein (441 aa).

Residues 103–110 (GVQGSGKT), 184–188 (DTAGR), and 244–247 (TKMD) each bind GTP.

Belongs to the GTP-binding SRP family. SRP54 subfamily. In terms of assembly, part of the signal recognition particle protein translocation system, which is composed of SRP and FtsY. Archaeal SRP consists of a 7S RNA molecule of 300 nucleotides and two protein subunits: SRP54 and SRP19.

The protein resides in the cytoplasm. The enzyme catalyses GTP + H2O = GDP + phosphate + H(+). Involved in targeting and insertion of nascent membrane proteins into the cytoplasmic membrane. Binds to the hydrophobic signal sequence of the ribosome-nascent chain (RNC) as it emerges from the ribosomes. The SRP-RNC complex is then targeted to the cytoplasmic membrane where it interacts with the SRP receptor FtsY. In Aeropyrum pernix (strain ATCC 700893 / DSM 11879 / JCM 9820 / NBRC 100138 / K1), this protein is Signal recognition particle 54 kDa protein.